Here is a 334-residue protein sequence, read N- to C-terminus: MIKRTLTVSLLSLSLGAMFASAGVMAANEPIQPIKAVTPENADMAELGKMLFFDPRLSKSGFISCNSCHNLSMGGTDNITTSIGHKWQQGPINAPTVLNSSMNLAQFWDGRAKDLKEQAAGPIANPKEMASTHEIAEKVVASMPQYRERFKKVFGSDEVTIDRITTAIAQFEETLVTPGSKFDKWLEGDKNALNQDELEGYNLFKGSGCVQCHNGPAVGGSSYQKMGVFKPYETKNPAAGRMDVTGNEADRNVFKVPTLRNIELTYPYFHDGGAATLEQAVETMGRIQLNREFNKDEVSKIVAFLKTLTGDQPDFKLPILPPSNNDTPRSQPYE.

The N-terminal stretch at 1 to 26 (MIKRTLTVSLLSLSLGAMFASAGVMA) is a signal peptide. Positions 65, 68, 69, 209, 212, 213, 270, and 284 each coordinate heme c. The interval 315 to 334 (FKLPILPPSNNDTPRSQPYE) is disordered. Residues 322-334 (PSNNDTPRSQPYE) are compositionally biased toward polar residues.

In terms of processing, binds 2 heme c groups covalently per subunit.

Its subcellular location is the periplasm. It carries out the reaction 2 Fe(II)-[cytochrome c] + H2O2 + 2 H(+) = 2 Fe(III)-[cytochrome c] + 2 H2O. The sequence is that of Cytochrome c551 peroxidase (ccp) from Nitrosomonas europaea (strain ATCC 19718 / CIP 103999 / KCTC 2705 / NBRC 14298).